Here is a 464-residue protein sequence, read N- to C-terminus: Arginine biosynthesis bifunctional protein ArgJ, chloroplastic (464 aa).

Positions 208, 234, 245, 332, 459, and 464 each coordinate substrate. Catalysis depends on Thr-245, which acts as the Nucleophile.

It belongs to the ArgJ family. As to quaternary structure, heterodimer of an alpha and a beta chain.

It localises to the plastid. The protein localises to the chloroplast. It catalyses the reaction N(2)-acetyl-L-ornithine + L-glutamate = N-acetyl-L-glutamate + L-ornithine. The catalysed reaction is L-glutamate + acetyl-CoA = N-acetyl-L-glutamate + CoA + H(+). The protein operates within amino-acid biosynthesis; L-arginine biosynthesis; L-ornithine and N-acetyl-L-glutamate from L-glutamate and N(2)-acetyl-L-ornithine (cyclic): step 1/1. It functions in the pathway amino-acid biosynthesis; L-arginine biosynthesis; N(2)-acetyl-L-ornithine from L-glutamate: step 1/4. Catalyzes two activities which are involved in the cyclic version of arginine biosynthesis: the synthesis of acetylglutamate from glutamate and acetyl-CoA, and of ornithine by transacetylation between acetylornithine and glutamate. The chain is Arginine biosynthesis bifunctional protein ArgJ, chloroplastic from Sorghum bicolor (Sorghum).